Here is a 243-residue protein sequence, read N- to C-terminus: DNA repair protein RecO (243 aa).

It belongs to the RecO family.

Its function is as follows. Involved in DNA repair and RecF pathway recombination. The sequence is that of DNA repair protein RecO from Frankia casuarinae (strain DSM 45818 / CECT 9043 / HFP020203 / CcI3).